Here is a 341-residue protein sequence, read N- to C-terminus: MSNDLEALRQETEQLKNQIREARKAAGDTTLAQACSGVEAVGRIQMRTRRTLRGHLAKIYAMHWASDSRNLVSASQDGKLIVWDGYTTNKVHAIPLRSSWVMTCAYAPSGNFVACGGLDNICSIYSLKTREGNVRVSRELPGHTGYLSCCRFIDDNSIVTSSGDMSCALWDIETGQQTTSFTGHTGDVMSLSTSPDFRTFVSGACDASAKLWDVRDGMCKQTFSGHESDINAITYFPNGHAFATGSDDATCRLFDIRADQEIGMYSHDNIICGITSVAFSKSGRLLLGRYDDFNCNVWDVLKQETHGVLAGHDNRVSCLGVTEDGSAVATGSWDSFLKIWN.

WD repeat units follow at residues 54–84 (GHLAKIYAMHWASDSRNLVSASQDGKLIVWD), 96–126 (LRSSWVMTCAYAPSGNFVACGGLDNICSIYS), 142–171 (GHTGYLSCCRFIDDNSIVTSSGDMSCALWD), 183–213 (GHTGDVMSLSTSPDFRTFVSGACDASAKLWD), 225–255 (GHESDINAITYFPNGHAFATGSDDATCRLFD), 269–299 (NIICGITSVAFSKSGRLLLGRYDDFNCNVWD), and 311–341 (GHDNRVSCLGVTEDGSAVATGSWDSFLKIWN).

It belongs to the WD repeat G protein beta family. As to quaternary structure, g proteins are composed of 3 units, alpha, beta and gamma.

Guanine nucleotide-binding proteins (G proteins) are involved as a modulator or transducer in various transmembrane signaling systems. The beta and gamma chains are required for the GTPase activity, for replacement of GDP by GTP, and for G protein-effector interaction. This is Guanine nucleotide-binding protein subunit beta from Lymnaea stagnalis (Great pond snail).